The primary structure comprises 368 residues: E3 ubiquitin-protein ligase makorin (368 aa).

2 C3H1-type zinc fingers span residues 2–29 (STKR…HDWN) and 30–57 (DQPN…HVKV). A disordered region spans residues 58–81 (SRNPTVAPPPSSSTTTRASSSLQP). The segment covering 69–78 (SSTTTRASSS) has biased composition (low complexity). A C3H1-type 3 zinc finger spans residues 147 to 174 (PADLPICSFAAGGNCPYGEECPQMHGDL). The segment at 175-202 (CTTCGKMCLHPYRPDEREEHTKLCEKNH) is makorin-type Cys-His. Residues 216-274 (CSVCLDRVLSKPTAAERKFGLLSECDHPFCISCIRNWRNNSPTSGMDVNSALRACPICR) form an RING-type zinc finger. A C3H1-type 4 zinc finger spans residues 303–332 (KLKSIDCKYFDFGTGTCPFGSSCFYKHAYR).

Expressed in primary roots and leaves. Detected in vascular bundle tissues.

It catalyses the reaction S-ubiquitinyl-[E2 ubiquitin-conjugating enzyme]-L-cysteine + [acceptor protein]-L-lysine = [E2 ubiquitin-conjugating enzyme]-L-cysteine + N(6)-ubiquitinyl-[acceptor protein]-L-lysine.. The protein operates within protein modification; protein ubiquitination. E3 ubiquitin ligase catalyzing the covalent attachment of ubiquitin moieties onto substrate proteins. The sequence is that of E3 ubiquitin-protein ligase makorin (MKRN) from Oryza sativa subsp. japonica (Rice).